The following is a 365-amino-acid chain: KEGLAPYIAETALRNLYLGSGIKEEEIEKYFKQFAKDLPGYLEDYNDEVFHQAGTVDAGAQGGGGNAGTQPPATGAAAQGGAQPPATGAAAQPPTTQGSQLPQGGATGGGGAQTGAGGTGSVTGGQRDKDVDAGTTGKITVPKLKAMSKKMRLPKAKGQDVLHLDFLLTYKPQQQDISNTRATREEFDRWYEAIKKEYELDDTQMTVVMSGLMVWCIENGCSPNISGSWTMMDGDEQTVFPLKPVIENASPTFRQIMHHFSDAAEAYIEYRNSTERYMPRYGLQRNLTDYSLARYAFDFYEMNSRTPARAKEAHMQMKAAAVRGSNTRLFGLDGNVGETQENTERHTAGDVSRNMHSLLGVQQHH.

Disordered stretches follow at residues 56-136 (VDAG…AGTT) and 334-365 (GNVGETQENTERHTAGDVSRNMHSLLGVQQHH). Residues 68 to 98 (GTQPPATGAAAQGGAQPPATGAAAQPPTTQG) show a composition bias toward low complexity. The segment covering 105–123 (GATGGGGAQTGAGGTGSVT) has biased composition (gly residues).

This sequence belongs to the potyviridae genome polyprotein family. In terms of processing, genome polyprotein of potyviruses undergoes post-translational proteolytic processing by the main proteinase NIa-pro resulting in the production of at least ten individual proteins. The P1 proteinase and the HC-pro cleave only their respective C-termini autocatalytically. 6K1 is essential for proper proteolytic separation of P3 from CI.

It is found in the virion. It catalyses the reaction RNA(n) + a ribonucleoside 5'-triphosphate = RNA(n+1) + diphosphate. In terms of biological role, an RNA-dependent RNA polymerase that plays an essential role in the virus replication. Involved in aphid transmission, cell-to-cell and systemis movement, encapsidation of the viral RNA and in the regulation of viral RNA amplification. The sequence is that of Genome polyprotein from Eleusine (Sorghum).